The chain runs to 696 residues: SEC14 domain and spectrin repeat-containing protein 1 (696 aa).

A CRAL-TRIO domain is found at 1 to 153 (MEASVILPIL…DFGGSLTYDH (153 aa)). Spectrin repeat units follow at residues 275–378 (EEIQ…NLLQ), 381–494 (LEFH…LKML), and 500–602 (FKCE…HRLE).

Belongs to the SOLO family. Interacts (via the spectrin 1 repeat) with TRPC4 and TRPC5 (via CIRB domain). Interacts with CTNNB1. In terms of tissue distribution, broad expression. High expression in thalamus and brain. Significantly expressed in vasculature.

May act as the primary docking protein directing membrane turnover and assembly of the transient receptor potential channels TRPC4 and TRPC5. Binds phospholipids such as phosphatidylinositol monophosphates, phosphatidylinositol diphosphates (PIP2s) and phosphatidic acid, but not less polar lipids including phosphatidylcholine, phosphatidylserine, and phosphatidylinositol. The binding to PIP2s is calcium dependent. Might be involved in the plasma membrane localization of CTNNB1. This Homo sapiens (Human) protein is SEC14 domain and spectrin repeat-containing protein 1 (SESTD1).